Reading from the N-terminus, the 225-residue chain is Cytidylate kinase (225 aa).

An ATP-binding site is contributed by 12-20 (GPSGAGKGT).

The protein belongs to the cytidylate kinase family. Type 1 subfamily.

The protein resides in the cytoplasm. The enzyme catalyses CMP + ATP = CDP + ADP. The catalysed reaction is dCMP + ATP = dCDP + ADP. The polypeptide is Cytidylate kinase (Proteus mirabilis (strain HI4320)).